We begin with the raw amino-acid sequence, 375 residues long: DNA replication and repair protein RecF (375 aa).

30-37 (GNNGSGKS) contacts ATP.

It belongs to the RecF family.

It localises to the cytoplasm. Functionally, the RecF protein is involved in DNA metabolism; it is required for DNA replication and normal SOS inducibility. RecF binds preferentially to single-stranded, linear DNA. It also seems to bind ATP. The sequence is that of DNA replication and repair protein RecF from Hahella chejuensis (strain KCTC 2396).